The primary structure comprises 274 residues: Ubiquinone biosynthesis O-methyltransferase, mitochondrial (274 aa).

The N-terminal 30 residues, 1-30 (MNSMNILNKVKNVKSYTRLVRQGFLSQQRN), are a transit peptide targeting the mitochondrion. S-adenosyl-L-methionine-binding residues include R65, G88, D109, and M154. Residues E155, E158, and H159 each coordinate Mg(2+).

The protein belongs to the class I-like SAM-binding methyltransferase superfamily. UbiG/COQ3 family. Component of a multi-subunit COQ enzyme complex, composed of at least coq3, coq4, coq5, coq6, coq7 and coq9. Mg(2+) serves as cofactor.

The protein resides in the mitochondrion inner membrane. The enzyme catalyses 3,4-dihydroxy-5-(all-trans-decaprenyl)benzoate + S-adenosyl-L-methionine = 4-hydroxy-3-methoxy-5-(all-trans-decaprenyl)benzoate + S-adenosyl-L-homocysteine + H(+). It catalyses the reaction a 3-demethylubiquinone + S-adenosyl-L-methionine = a ubiquinone + S-adenosyl-L-homocysteine. The catalysed reaction is 3-demethylubiquinol-10 + S-adenosyl-L-methionine = ubiquinol-10 + S-adenosyl-L-homocysteine + H(+). The protein operates within cofactor biosynthesis; ubiquinone biosynthesis. Its function is as follows. O-methyltransferase required for two non-consecutive steps during ubiquinone biosynthesis. Catalyzes the 2 O-methylation of 3,4-dihydroxy-5-(all-trans-decaprenyl)benzoic acid into 4-hydroxy-3-methoxy-5-(all-trans-decaprenyl)benzoic acid. Also catalyzes the last step of ubiquinone biosynthesis by mediating methylation of 3-demethylubiquinone into ubiquinone. Also able to mediate the methylation of 3-demethylubiquinol-10 into ubiquinol-10. This Schizosaccharomyces pombe (strain 972 / ATCC 24843) (Fission yeast) protein is Ubiquinone biosynthesis O-methyltransferase, mitochondrial.